We begin with the raw amino-acid sequence, 415 residues long: uncharacterized protein (415 aa).

One can recognise a TRAM domain in the interval 1–55 (MSTGTVTIDRLGAQGDGVARTEAGPVFAPFTLPGETVSLAVNKANGTLISLKEAS). Positions 63, 75, 78, and 152 each coordinate [4Fe-4S] cluster. S-adenosyl-L-methionine contacts are provided by Gln252, Phe279, Glu299, and Asp347. Cys373 functions as the Nucleophile in the catalytic mechanism.

It belongs to the class I-like SAM-binding methyltransferase superfamily. RNA M5U methyltransferase family.

This is an uncharacterized protein from Rhizobium meliloti (strain 1021) (Ensifer meliloti).